We begin with the raw amino-acid sequence, 166 residues long: Small ribosomal subunit protein uS9 (166 aa).

The segment covering 1 to 16 (MSDTTNEVEETYEVDE) has biased composition (acidic residues). The segment at 1–45 (MSDTTNEVEETYEVDEQGIAYSSESAPSADAPLRPATIAPANATG) is disordered.

The protein belongs to the universal ribosomal protein uS9 family.

This is Small ribosomal subunit protein uS9 from Nocardioides sp. (strain ATCC BAA-499 / JS614).